Reading from the N-terminus, the 71-residue chain is U3-agatoxin-Ao1a (71 aa).

A signal peptide spans 1–20 (MKAVIFFCLLSVMVFTVIEA). Positions 21–33 (VKEEGTKPAEAAR) are excised as a propeptide. 4 disulfide bridges follow: Cys35–Cys51, Cys42–Cys56, Cys50–Cys66, and Cys58–Cys64. Ser70 is modified (serine amide).

It belongs to the neurotoxin 07 (Beta/delta-agtx) family. 01 (aga-2) subfamily. As to expression, expressed by the venom gland.

It is found in the secreted. Insecticidal neurotoxin that modulates the insect Nav channel (DmNaV1/tipE (para/tipE)) in a unique manner, with both the activation and inactivation processes being affected. The voltage dependence of activation is shifted toward more hyperpolarized potentials (analogous to site 4 toxins) and a non-inactivating persistent sodium current is induced (site 3-like action). Interestingly, both effects take place in a voltage-dependent manner, producing a bell-shaped curve between -80 and 0 mV. Compared to beta/delta-agatoxin-1 to -3, this toxin appears to affect the insect sodium channel only weakly. This chain is U3-agatoxin-Ao1a, found in Agelena orientalis (Funnel-web spider).